Reading from the N-terminus, the 60-residue chain is Metallothionein-like protein EMB30 (60 aa).

This sequence belongs to the metallothionein superfamily. Type 15 family.

Metallothioneins have a high content of cysteine residues that bind various heavy metals. The sequence is that of Metallothionein-like protein EMB30 (EMB30) from Picea glauca (White spruce).